An 84-amino-acid polypeptide reads, in one-letter code: Cell division topological specificity factor (84 aa).

It belongs to the MinE family.

Prevents the cell division inhibition by proteins MinC and MinD at internal division sites while permitting inhibition at polar sites. This ensures cell division at the proper site by restricting the formation of a division septum at the midpoint of the long axis of the cell. In Burkholderia cenocepacia (strain HI2424), this protein is Cell division topological specificity factor.